Reading from the N-terminus, the 279-residue chain is Zinc finger AN1 and C2H2 domain-containing stress-associated protein 11 (279 aa).

2 consecutive AN1-type zinc fingers follow at residues 7–55 (PDLG…REDV) and 95–145 (ATKK…KLPF). 16 residues coordinate Zn(2+): cysteine 13, cysteine 18, cysteine 28, cysteine 31, cysteine 36, histidine 39, histidine 45, cysteine 47, cysteine 101, cysteine 106, cysteine 118, cysteine 121, cysteine 126, histidine 129, histidine 135, and cysteine 137. Residues 152–178 (STTRKEAKTTRPNKAHPSTSSSSSSSR) are disordered. Over residues 169-178 (STSSSSSSSR) the composition is skewed to low complexity. 2 consecutive C2H2-type zinc fingers follow at residues 213-236 (EVCP…EKTH) and 250-273 (DVCP…ERDH).

Its function is as follows. May be involved in environmental stress response. The polypeptide is Zinc finger AN1 and C2H2 domain-containing stress-associated protein 11 (SAP11) (Arabidopsis thaliana (Mouse-ear cress)).